The chain runs to 212 residues: Nitrile hydratase subunit beta (212 aa).

The protein belongs to the nitrile hydratase subunit beta family. As to quaternary structure, heterodimer of an alpha and a beta chain.

The enzyme catalyses an aliphatic primary amide = an aliphatic nitrile + H2O. Functionally, NHase catalyzes the hydration of various nitrile compounds to the corresponding amides. This is Nitrile hydratase subunit beta (nthB) from Rhodococcus erythropolis (Arthrobacter picolinophilus).